The following is a 227-amino-acid chain: UPF0758 protein Pcar_0065 (227 aa).

One can recognise an MPN domain in the interval 105–227 (RYTSPQAVFA…YVSLADRGVL (123 aa)). His176, His178, and Asp189 together coordinate Zn(2+). The JAMM motif motif lies at 176–189 (HNHPSGDPSPSRED).

It belongs to the UPF0758 family.

In Syntrophotalea carbinolica (strain DSM 2380 / NBRC 103641 / GraBd1) (Pelobacter carbinolicus), this protein is UPF0758 protein Pcar_0065.